Reading from the N-terminus, the 254-residue chain is Triosephosphate isomerase (254 aa).

Substrate is bound at residue 9–11; sequence NWK. Residue histidine 96 is the Electrophile of the active site. The Proton acceptor role is filled by glutamate 169. Residues glycine 175, serine 215, and 236-237 each bind substrate; that span reads GG.

Belongs to the triosephosphate isomerase family. As to quaternary structure, homodimer.

The protein resides in the cytoplasm. It catalyses the reaction D-glyceraldehyde 3-phosphate = dihydroxyacetone phosphate. The protein operates within carbohydrate biosynthesis; gluconeogenesis. It functions in the pathway carbohydrate degradation; glycolysis; D-glyceraldehyde 3-phosphate from glycerone phosphate: step 1/1. Functionally, involved in the gluconeogenesis. Catalyzes stereospecifically the conversion of dihydroxyacetone phosphate (DHAP) to D-glyceraldehyde-3-phosphate (G3P). This is Triosephosphate isomerase from Borrelia duttonii (strain Ly).